Consider the following 173-residue polypeptide: Adenine phosphoribosyltransferase (173 aa).

The protein belongs to the purine/pyrimidine phosphoribosyltransferase family. Homodimer.

The protein localises to the cytoplasm. It catalyses the reaction AMP + diphosphate = 5-phospho-alpha-D-ribose 1-diphosphate + adenine. It participates in purine metabolism; AMP biosynthesis via salvage pathway; AMP from adenine: step 1/1. Catalyzes a salvage reaction resulting in the formation of AMP, that is energically less costly than de novo synthesis. The protein is Adenine phosphoribosyltransferase of Thermoanaerobacter sp. (strain X514).